The following is a 539-amino-acid chain: Phosphoenolpyruvate carboxykinase (ATP) (539 aa).

Arginine 64, tyrosine 206, and lysine 212 together coordinate substrate. ATP is bound by residues lysine 212, histidine 231, and glycine 247–threonine 255. Mn(2+) is bound by residues lysine 212 and histidine 231. Mn(2+) is bound at residue aspartate 268. ATP is bound by residues glutamate 296, arginine 332, arginine 448–isoleucine 449, and threonine 454. Arginine 332 serves as a coordination point for substrate.

The protein belongs to the phosphoenolpyruvate carboxykinase (ATP) family. As to quaternary structure, monomer. It depends on Mn(2+) as a cofactor.

It is found in the cytoplasm. It catalyses the reaction oxaloacetate + ATP = phosphoenolpyruvate + ADP + CO2. It functions in the pathway carbohydrate biosynthesis; gluconeogenesis. Functionally, involved in the gluconeogenesis. Catalyzes the conversion of oxaloacetate (OAA) to phosphoenolpyruvate (PEP) through direct phosphoryl transfer between the nucleoside triphosphate and OAA. In Edwardsiella ictaluri (strain 93-146), this protein is Phosphoenolpyruvate carboxykinase (ATP).